The following is a 184-amino-acid chain: Endoribonuclease YbeY (184 aa).

2 stretches are compositionally biased toward acidic residues: residues 1-11 (MTVEVGADENP) and 19-29 (DGAGDESDDED). The interval 1 to 38 (MTVEVGADENPDFAHDETDGAGDESDDEDAQGRDPELD) is disordered. The Zn(2+) site is built by His-146, His-150, and His-156.

This sequence belongs to the endoribonuclease YbeY family. The cofactor is Zn(2+).

It is found in the cytoplasm. In terms of biological role, single strand-specific metallo-endoribonuclease involved in late-stage 70S ribosome quality control and in maturation of the 3' terminus of the 16S rRNA. This Burkholderia pseudomallei (strain K96243) protein is Endoribonuclease YbeY.